The sequence spans 501 residues: uncharacterized protein (501 aa).

Residues 14–237 form the BAR domain; that stretch reads EKFGFDRQKT…GFSKKRDNVN (224 aa). Position 285 is a phosphothreonine (threonine 285). 2 disordered regions span residues 302 to 321 and 329 to 414; these read IASS…DVSD and SAVD…RSYS. Positions 309–320 are enriched in basic and acidic residues; the sequence is QHTEDNYNKDVS. A compositionally biased stretch (polar residues) spans 390-402; sequence SQCNVSPSPSNIS. Serine 414 is subject to Phosphoserine. In terms of domain architecture, SH3 spans 421-487; the sequence is SSRKVVRMKY…PSNYCVPAHP (67 aa).

It is found in the cytoplasm. This is an uncharacterized protein from Schizosaccharomyces pombe (strain 972 / ATCC 24843) (Fission yeast).